Here is a 273-residue protein sequence, read N- to C-terminus: Undecaprenyl-diphosphatase (273 aa).

7 helical membrane passes run 6-26 (SLLIAAILGVVEGLTEFLPVS), 45-65 (AKTFEVVIQLGSILAVVVMFW), 90-110 (LTLIHILLGMIPAMVLGLVFH), 116-136 (LFNPINVMYALVVGGLLLIAA), 190-210 (YAASEFSFLLAVPMMMGATVL), 222-242 (ADIPMFAVGFVTAFVVALIAI), and 252-272 (ISFIPFAIYRFVVAAAVYVVF).

The protein belongs to the UppP family.

The protein resides in the cell inner membrane. It carries out the reaction di-trans,octa-cis-undecaprenyl diphosphate + H2O = di-trans,octa-cis-undecaprenyl phosphate + phosphate + H(+). Catalyzes the dephosphorylation of undecaprenyl diphosphate (UPP). Confers resistance to bacitracin. The sequence is that of Undecaprenyl-diphosphatase from Salmonella arizonae (strain ATCC BAA-731 / CDC346-86 / RSK2980).